The primary structure comprises 258 residues: Serine/arginine-rich splicing factor x16 (258 aa).

Residues Arg8 to Gly81 form the RRM domain. 2 disordered regions span residues Gly81–Gly113 and Cys130–Asp258. The span at Ser86–Gly103 shows a compositional bias: gly residues. The span at Gly104–Gly113 shows a compositional bias: basic and acidic residues. A CCHC-type zinc finger spans residues Lys116–Glu132. Basic residues-rich tracts occupy residues Cys130–Ser141 and Ser149–Ser166. Basic and acidic residues-rich tracts occupy residues Asn180–Asn197 and Arg210–Arg221. Low complexity-rich tracts occupy residues Arg231 to Gly240 and Ser249 to Asp258.

Interacts (via Arg/Ser-rich region) with Alsin2/CG7564, Rbp1 and Doa (via N-terminus). In terms of processing, highly phosphorylated. May be phosphorylated by the serine/threonine-protein kinase Doa.

The protein localises to the nucleus. Its function is as follows. Serine/arginine-rich splicing factor (SR protein) involved in differential exon usage during RNA transcript processing, probably by binding exonic splicing enhancer elements and recruiting components of the splicing machinery. Binds RNA stem-loop structures with consensus sequence 5'-CCGUNUNKNW-3'. Regulator of genes involved in lipid and carbohydrate metabolism, the immune response and the response to xenobiotics. The protein is Serine/arginine-rich splicing factor x16 of Drosophila melanogaster (Fruit fly).